Reading from the N-terminus, the 436-residue chain is Histidinol dehydrogenase (436 aa).

The substrate site is built by serine 237, glutamine 259, and histidine 262. Zn(2+) is bound by residues glutamine 259 and histidine 262. Residues glutamate 327 and histidine 328 each act as proton acceptor in the active site. Residues histidine 328, aspartate 361, glutamate 415, and histidine 420 each contribute to the substrate site. Residue aspartate 361 participates in Zn(2+) binding. Histidine 420 lines the Zn(2+) pocket.

This sequence belongs to the histidinol dehydrogenase family. Zn(2+) is required as a cofactor.

It catalyses the reaction L-histidinol + 2 NAD(+) + H2O = L-histidine + 2 NADH + 3 H(+). It participates in amino-acid biosynthesis; L-histidine biosynthesis; L-histidine from 5-phospho-alpha-D-ribose 1-diphosphate: step 9/9. Catalyzes the sequential NAD-dependent oxidations of L-histidinol to L-histidinaldehyde and then to L-histidine. The chain is Histidinol dehydrogenase from Helicobacter hepaticus (strain ATCC 51449 / 3B1).